The following is a 557-amino-acid chain: Isocitrate lyase (557 aa).

Thr53 bears the Phosphothreonine mark. 106 to 108 contributes to the substrate binding site; sequence SGW. Asp179 is a binding site for Mg(2+). Residue Cys217 is the Proton acceptor of the active site. Substrate is bound by residues 218-219, Arg254, 437-441, and Thr471; these read GH and NLSPS.

It belongs to the isocitrate lyase/PEP mutase superfamily. Isocitrate lyase family. In terms of assembly, homotetramer. Mg(2+) serves as cofactor. In terms of processing, phosphorylated in response to elevated glucose levels, leading first to reversible inactivation of the enzyme (short-term inactivation), and at a later stage to proteolytic degradation of the protein (long-term inactivation).

It localises to the cytoplasm. It is found in the secreted. Its subcellular location is the extracellular space. The protein resides in the extracellular matrix. The protein localises to the vacuole. The catalysed reaction is D-threo-isocitrate = glyoxylate + succinate. The enzyme catalyses (2S,3R)-3-hydroxybutane-1,2,3-tricarboxylate = pyruvate + succinate. It functions in the pathway carbohydrate metabolism; glyoxylate cycle; (S)-malate from isocitrate: step 1/2. With respect to regulation, phosphorylated and inactivated after addition of glucose to the cell culture (repressing conditions). Functionally, catalyzes the formation of succinate and glyoxylate from isocitrate, a key step of the glyoxylate cycle, which operates as an anaplerotic route for replenishing the tricarboxylic acid cycle. Required for growth on ethanol or acetate, but dispensable when fermentable carbon sources are available. Also acts on 2-methylisocitrate. This is Isocitrate lyase from Saccharomyces cerevisiae (strain ATCC 204508 / S288c) (Baker's yeast).